The primary structure comprises 463 residues: MRTVTAPPRPGPGLRVRLPQVAPSVREFLATEAGGAVLLLLAAVAALLWANSPWSGSYDRFWSTTAELRLGSAGFDMTLHHWVNDGAMAIFFAVVGLEISREFTTGELRDRRTIAVPALGAIGGLILPAAIYFVVNRSGPESNGWGIPMSTDTAFVIGILALFGPRCPDRLRLFLLTLAIVDDIGAITVVGIFYTDHLNPVGLAVAGATVLAILGLRWLRVWQLPPYILASLVLWGAIHVSGVHATLAGVLVGLLVPAVPPRPDQVEEVPVYVRALQEDSNATRVGLAVAAAKATVPANDRLQRVLHPISAFVVVPVFGLANAGVHLDGSALRTAATSSVTLGVAAALIAGNACGISVAGVAAIRTGLGQLPGRVRYGHLLGAATLAGIGFTISLFITELAFTDEALQEQAKIGILAGSLVAALAGTVILRVLGERMPLCSPMTDEPVPRLPPRPWRAPVPAK.

The next 11 membrane-spanning stretches (helical) occupy residues F28–L48, L79–I99, I114–V134, G144–G164, L173–F193, D196–L216, L232–V252, V305–V325, V344–I364, Y377–I397, and I413–L433. Residues T444–K463 form a disordered region. Positions P449–K463 are enriched in pro residues.

It belongs to the NhaA Na(+)/H(+) (TC 2.A.33) antiporter family.

The protein localises to the cell membrane. It carries out the reaction Na(+)(in) + 2 H(+)(out) = Na(+)(out) + 2 H(+)(in). Functionally, na(+)/H(+) antiporter that extrudes sodium in exchange for external protons. The polypeptide is Na(+)/H(+) antiporter NhaA 3 (Frankia alni (strain DSM 45986 / CECT 9034 / ACN14a)).